The following is a 647-amino-acid chain: MTKQEYEKAVDTLNAWAKAYYDEDEPLASDEEYDALYHAVLAFEQANPSEISLFSPTKRVGGGVKEGFSKASHIKRMWSMEDIFSLGELDAWLKRGEKENLTFVAEPKFDGASLNLLYENGVLVRAITRGDGVTGEDVTQNARTISSVPKSISYKGLIEIRGEVVIRKDDFELLNMERAKEGEAPLSNPRNAAAGSLRQLDSAVTAKRKLLFIPWGVGEQSLGLKDHSEVMKFVRDLGFERDDFFKILKKDELEAAYNELLANRDSKSVMMDGMVIRVNDLARCEQLGYTVKFPKFMVAFKFPAIEKVTRLKDVALQVGRSGVVTPVGVLDEVNIDGANVKSATLHNFDEIERLGVMKNDYIGIIRSGDVIPKITKVFKDRRDGSEQAIERPKFCPVCGSHLLDEGVFVKCQNLSCRARVVGSIIHYASKKCLNIDGLGDAIVNLLFDKGLIACIKDIYGLKFDDLMSLEGFKEKKVNNLLNAIEASKGAELSRFITGLGCEHIGEVAAKKLASSFGLDWLDASFEELTALEGFGVEMANSLIDFAEVNRDEILALSQIVQPSVTQVQSISNALSGKTVVITGTLSRPRDEIKAELESFGAKVSGSVSKKTDFVLAGEEAGSKLDKANELGVLVIDESEYERLKLEV.

NAD(+) is bound by residues 30–34 (DEEYD), 79–80 (SM), and Glu106. Residue Lys108 is the N6-AMP-lysine intermediate of the active site. NAD(+) contacts are provided by Arg129, Glu163, and Lys301. Zn(2+)-binding residues include Cys395, Cys398, Cys411, and Cys416. The BRCT domain maps to 569-647 (SISNALSGKT…SEYERLKLEV (79 aa)).

Belongs to the NAD-dependent DNA ligase family. LigA subfamily. The cofactor is Mg(2+). Mn(2+) serves as cofactor.

The catalysed reaction is NAD(+) + (deoxyribonucleotide)n-3'-hydroxyl + 5'-phospho-(deoxyribonucleotide)m = (deoxyribonucleotide)n+m + AMP + beta-nicotinamide D-nucleotide.. Its function is as follows. DNA ligase that catalyzes the formation of phosphodiester linkages between 5'-phosphoryl and 3'-hydroxyl groups in double-stranded DNA using NAD as a coenzyme and as the energy source for the reaction. It is essential for DNA replication and repair of damaged DNA. This is DNA ligase from Campylobacter concisus (strain 13826).